A 945-amino-acid polypeptide reads, in one-letter code: Leucine--tRNA ligase (945 aa).

The short motif at 43 to 53 (PYPNGAIHIGH) is the 'HIGH' region element. A 'KMSKS' region motif is present at residues 638 to 642 (KMSKS). Lys-641 contributes to the ATP binding site.

This sequence belongs to the class-I aminoacyl-tRNA synthetase family.

The protein localises to the cytoplasm. The enzyme catalyses tRNA(Leu) + L-leucine + ATP = L-leucyl-tRNA(Leu) + AMP + diphosphate. The polypeptide is Leucine--tRNA ligase (Pyrobaculum neutrophilum (strain DSM 2338 / JCM 9278 / NBRC 100436 / V24Sta) (Thermoproteus neutrophilus)).